We begin with the raw amino-acid sequence, 352 residues long: S-adenosylmethionine:tRNA ribosyltransferase-isomerase (352 aa).

Belongs to the QueA family. Monomer.

Its subcellular location is the cytoplasm. The enzyme catalyses 7-aminomethyl-7-carbaguanosine(34) in tRNA + S-adenosyl-L-methionine = epoxyqueuosine(34) in tRNA + adenine + L-methionine + 2 H(+). It functions in the pathway tRNA modification; tRNA-queuosine biosynthesis. In terms of biological role, transfers and isomerizes the ribose moiety from AdoMet to the 7-aminomethyl group of 7-deazaguanine (preQ1-tRNA) to give epoxyqueuosine (oQ-tRNA). The chain is S-adenosylmethionine:tRNA ribosyltransferase-isomerase from Vibrio cholerae serotype O1 (strain ATCC 39541 / Classical Ogawa 395 / O395).